Here is a 176-residue protein sequence, read N- to C-terminus: 3-hydroxyacyl-[acyl-carrier-protein] dehydratase FabZ (176 aa).

H54 is a catalytic residue.

The protein belongs to the thioester dehydratase family. FabZ subfamily.

It localises to the cytoplasm. It catalyses the reaction a (3R)-hydroxyacyl-[ACP] = a (2E)-enoyl-[ACP] + H2O. In terms of biological role, involved in unsaturated fatty acids biosynthesis. Catalyzes the dehydration of short chain beta-hydroxyacyl-ACPs and long chain saturated and unsaturated beta-hydroxyacyl-ACPs. This chain is 3-hydroxyacyl-[acyl-carrier-protein] dehydratase FabZ, found in Yersinia pseudotuberculosis serotype O:1b (strain IP 31758).